We begin with the raw amino-acid sequence, 343 residues long: Protein RecA (343 aa).

ATP is bound at residue 64-71 (GPESSGKT).

The protein belongs to the RecA family.

The protein localises to the cytoplasm. Can catalyze the hydrolysis of ATP in the presence of single-stranded DNA, the ATP-dependent uptake of single-stranded DNA by duplex DNA, and the ATP-dependent hybridization of homologous single-stranded DNAs. It interacts with LexA causing its activation and leading to its autocatalytic cleavage. The polypeptide is Protein RecA (Bacillus cereus (strain ATCC 10987 / NRS 248)).